The chain runs to 316 residues: Epoxide hydrolase 2 (316 aa).

Positions 25–302 constitute an AB hydrolase-1 domain; the sequence is PAVLFLHGFP…AAHFINQERP (278 aa). The active-site Nucleophile is aspartate 101. Tyrosine 150 lines the an epoxide pocket. Tyrosine 230 serves as the catalytic Proton donor. Catalysis depends on histidine 295, which acts as the Proton acceptor.

This sequence belongs to the AB hydrolase superfamily. Epoxide hydrolase family. As to quaternary structure, homodimer. Highly expressed in young fruits 15 days after anthesis (15-DAA). Also observed in stems and leaves.

It carries out the reaction an epoxide + H2O = an ethanediol. The enzyme catalyses (24S)-24,25-epoxycucurbitadienol + H2O = (24R)-24,25-dihydroxycucurbitadienol. Its pathway is secondary metabolite biosynthesis; terpenoid biosynthesis. In terms of biological role, epoxide hydrolase involved in the biosynthesis of cucurbitacin and mogroside tetracyclic triterpene natural products (e.g. siamenoside I and mogrosides IV, V and VI). Cucurbitacins have cytotoxic properties and exhibit deterrent taste as a defense barrier against herbivores. Mogrosides are nonsugar highly oxygenated compounds used as high-intensity zero-calorie sweeteners; they also possess pharmacological properties such as regulating immunity, lowering blood sugar and lipid levels, protecting the liver, and acting as antioxidants and antitumor agents. Catalyzes the hydrolysis of aromatic epoxide-containing substrates, such as the conversion of 24,25-epoxycucurbitadienol to 24,25-dihydroxycucurbitadienol. This is Epoxide hydrolase 2 from Siraitia grosvenorii (Monk's fruit).